The primary structure comprises 203 residues: Signal peptidase I (203 aa).

Positions 1-26 are disordered; the sequence is MSSESDSPTPQTPPAQPAASQPKADS. The Cytoplasmic segment spans residues 1–33; it reads MSSESDSPTPQTPPAQPAASQPKADSPLMEGIK. The span at 17–26 shows a compositional bias: low complexity; that stretch reads PAASQPKADS. Residues 34 to 50 traverse the membrane as a helical segment; that stretch reads TIGLSVVLALGIRTFVA. At 51-203 the chain is on the extracellular side; it reads EARYIPSESM…LGELGPPPSY (153 aa). Catalysis depends on residues serine 59 and lysine 109.

It belongs to the peptidase S26 family.

The protein localises to the cell membrane. It catalyses the reaction Cleavage of hydrophobic, N-terminal signal or leader sequences from secreted and periplasmic proteins.. The polypeptide is Signal peptidase I (lepB) (Leptolyngbya laminosa (Phormidium laminosum)).